Reading from the N-terminus, the 196-residue chain is MKPVVVFVLGGPGAGKGTQCARIVEKYGYTHLSAGDLLRDERKRPGSQYGELIENYIKEGEIVPVEITISLLKRAMDQTMAANSQKNKFLIDGFPRNEDNLQGWNKTMDGKADVSFVLFFDCDNEICIGRCLERGKSSGRSDDNRESLEKRIHTYLQSTRPIIDLYERMGKVRRVDASKSVDEVFEKVVQIFDKEG.

Gly-13–Thr-18 serves as a coordination point for ATP. The interval Ser-33 to Val-63 is NMP. A ribonucleoside 5'-phosphate-binding positions include Arg-39, Glu-61–Val-63, and Gly-93–Arg-96. Asn-100 contributes to the CMP binding site. Positions Glu-133–Asp-143 are LID. Arg-134 lines the ATP pocket. The a ribonucleoside 5'-phosphate site is built by Arg-140 and Arg-151. Lys-179 is an ATP binding site.

This sequence belongs to the adenylate kinase family. UMP-CMP kinase subfamily. Monomer. It depends on Mg(2+) as a cofactor.

It is found in the nucleus. The protein localises to the cytoplasm. It carries out the reaction CMP + ATP = CDP + ADP. The catalysed reaction is dCMP + ATP = dCDP + ADP. The enzyme catalyses UMP + ATP = UDP + ADP. It catalyses the reaction a 2'-deoxyribonucleoside 5'-diphosphate + ATP = a 2'-deoxyribonucleoside 5'-triphosphate + ADP. It carries out the reaction a ribonucleoside 5'-diphosphate + ATP = a ribonucleoside 5'-triphosphate + ADP. Functionally, catalyzes the phosphorylation of pyrimidine nucleoside monophosphates at the expense of ATP. Plays an important role in de novo pyrimidine nucleotide biosynthesis. Has preference for UMP and CMP as phosphate acceptors. Also displays broad nucleoside diphosphate kinase activity. The sequence is that of UMP-CMP kinase (CMPK) from Gallus gallus (Chicken).